Reading from the N-terminus, the 414-residue chain is Serine hydroxymethyltransferase (414 aa).

Residues Leu121 and 125 to 127 (GHL) contribute to the (6S)-5,6,7,8-tetrahydrofolate site. N6-(pyridoxal phosphate)lysine is present on Lys229.

Belongs to the SHMT family. As to quaternary structure, homodimer. The cofactor is pyridoxal 5'-phosphate.

It localises to the cytoplasm. It carries out the reaction (6R)-5,10-methylene-5,6,7,8-tetrahydrofolate + glycine + H2O = (6S)-5,6,7,8-tetrahydrofolate + L-serine. Its pathway is one-carbon metabolism; tetrahydrofolate interconversion. The protein operates within amino-acid biosynthesis; glycine biosynthesis; glycine from L-serine: step 1/1. Functionally, catalyzes the reversible interconversion of serine and glycine with tetrahydrofolate (THF) serving as the one-carbon carrier. This reaction serves as the major source of one-carbon groups required for the biosynthesis of purines, thymidylate, methionine, and other important biomolecules. Also exhibits THF-independent aldolase activity toward beta-hydroxyamino acids, producing glycine and aldehydes, via a retro-aldol mechanism. The polypeptide is Serine hydroxymethyltransferase (Verminephrobacter eiseniae (strain EF01-2)).